A 500-amino-acid polypeptide reads, in one-letter code: Probable cytosol aminopeptidase (500 aa).

Residues Lys265 and Asp270 each contribute to the Mn(2+) site. Lys277 is an active-site residue. Positions 288, 347, and 349 each coordinate Mn(2+). The active site involves Arg351.

The protein belongs to the peptidase M17 family. Mn(2+) is required as a cofactor.

Its subcellular location is the cytoplasm. It catalyses the reaction Release of an N-terminal amino acid, Xaa-|-Yaa-, in which Xaa is preferably Leu, but may be other amino acids including Pro although not Arg or Lys, and Yaa may be Pro. Amino acid amides and methyl esters are also readily hydrolyzed, but rates on arylamides are exceedingly low.. It carries out the reaction Release of an N-terminal amino acid, preferentially leucine, but not glutamic or aspartic acids.. In terms of biological role, presumably involved in the processing and regular turnover of intracellular proteins. Catalyzes the removal of unsubstituted N-terminal amino acids from various peptides. The chain is Probable cytosol aminopeptidase from Rickettsia typhi (strain ATCC VR-144 / Wilmington).